We begin with the raw amino-acid sequence, 328 residues long: Putative HTH-type transcriptional regulatory protein MA_3524 (328 aa).

The 59-residue stretch at 132–190 folds into the HTH cro/C1-type domain; that stretch reads LKKARTDQSMSLGTLASMVGVSRRTISKYEEEGMDASIDVVLQLEDIFGVELARPIDIL. The H-T-H motif DNA-binding region spans 143 to 162; it reads LGTLASMVGVSRRTISKYEE.

The sequence is that of Putative HTH-type transcriptional regulatory protein MA_3524 from Methanosarcina acetivorans (strain ATCC 35395 / DSM 2834 / JCM 12185 / C2A).